The sequence spans 545 residues: Glucose-6-phosphate isomerase (545 aa).

Glutamate 351 acts as the Proton donor in catalysis. Residues histidine 382 and lysine 510 contribute to the active site.

The protein belongs to the GPI family.

Its subcellular location is the cytoplasm. It carries out the reaction alpha-D-glucose 6-phosphate = beta-D-fructose 6-phosphate. Its pathway is carbohydrate biosynthesis; gluconeogenesis. It functions in the pathway carbohydrate degradation; glycolysis; D-glyceraldehyde 3-phosphate and glycerone phosphate from D-glucose: step 2/4. Functionally, catalyzes the reversible isomerization of glucose-6-phosphate to fructose-6-phosphate. This chain is Glucose-6-phosphate isomerase, found in Helicobacter pylori (strain ATCC 700392 / 26695) (Campylobacter pylori).